The chain runs to 1676 residues: DNA-directed RNA polymerase subunit beta'-beta'' (1676 aa).

The interval 1–582 (MCDAIQIRLA…FLKTTPGRII (582 aa)) is DNA-directed RNA polymerase subunit beta'. Zn(2+) contacts are provided by Cys-64, Cys-66, Cys-79, and Cys-82. Residues Asp-454, Asp-456, and Asp-458 each coordinate Mg(2+). Residues 583–1676 (FYQQAAYHVG…IPAGTGAKYL (1094 aa)) form a DNA-directed RNA polymerase subunit beta'' region. 4 residues coordinate Zn(2+): Cys-804, Cys-859, Cys-866, and Cys-869.

In the N-terminal section; belongs to the RNA polymerase beta' chain family. RpoC1 subfamily. It in the C-terminal section; belongs to the RNA polymerase beta' chain family. RpoC2 subfamily. As to quaternary structure, in plastids the minimal PEP RNA polymerase catalytic core is composed of four subunits: alpha, beta, beta', and beta''. When a (nuclear-encoded) sigma factor is associated with the core the holoenzyme is formed, which can initiate transcription. Beta' and beta'' are fused in this algae. The cofactor is Mg(2+). Requires Zn(2+) as cofactor.

The protein resides in the plastid. It localises to the chloroplast. It carries out the reaction RNA(n) + a ribonucleoside 5'-triphosphate = RNA(n+1) + diphosphate. DNA-dependent RNA polymerase catalyzes the transcription of DNA into RNA using the four ribonucleoside triphosphates as substrates. The sequence is that of DNA-directed RNA polymerase subunit beta'-beta'' from Cyanidioschyzon merolae (strain NIES-3377 / 10D) (Unicellular red alga).